We begin with the raw amino-acid sequence, 112 residues long: DNA-binding protein Bv3F (112 aa).

Positions 65–92 (KRNSKRMSTVPKYRDPATGKTWSGRGRQ) are disordered. 2 consecutive DNA-binding regions follow at residues 89–94 (RGRQPA) and 89–95 (RGRQPAW).

The protein belongs to the histone-like protein H-NS family. As to quaternary structure, homodimer that oligomerizes on DNA into higher-order complexes that form bridges between disparate regions of DNA compacting it.

Its subcellular location is the cytoplasm. The protein localises to the nucleoid. Its function is as follows. A DNA-binding protein implicated in transcriptional repression and chromosome organization and compaction. Binds in the minor groove of AT-rich DNA. Binds nucleation sites in AT-rich DNA and bridges them, forming higher-order nucleoprotein complexes and condensing the chromosome. As many horizontally transferred genes are AT-rich, it plays a central role in silencing foreign genes. This Burkholderia vietnamiensis (strain G4 / LMG 22486) (Burkholderia cepacia (strain R1808)) protein is DNA-binding protein Bv3F.